The chain runs to 147 residues: MASNTDQASLEQEVRSLQAYANEYSQQFELLTQQLRFIESARGEALASTESLEAFSGLEGDVPTLLNLGGGISVHAIVTDTKKILVGIGAGITVEKPVEEAITFLHDRVTEMDASAKRLSESLGKLQEQMRAVEQRMQEIYSQTQHR.

Belongs to the prefoldin alpha subunit family. As to quaternary structure, heterohexamer of two alpha and four beta subunits.

It is found in the cytoplasm. Functionally, molecular chaperone capable of stabilizing a range of proteins. Seems to fulfill an ATP-independent, HSP70-like function in archaeal de novo protein folding. This Methanocorpusculum labreanum (strain ATCC 43576 / DSM 4855 / Z) protein is Prefoldin subunit alpha.